The chain runs to 938 residues: Isoleucine--tRNA ligase (938 aa).

The short motif at 58–68 (PYANGNIHIGH) is the 'HIGH' region element. L-isoleucyl-5'-AMP is bound at residue Glu561. The short motif at 602–606 (KMSKS) is the 'KMSKS' region element. Lys605 contributes to the ATP binding site. 4 residues coordinate Zn(2+): Cys901, Cys904, Cys921, and Cys924.

This sequence belongs to the class-I aminoacyl-tRNA synthetase family. IleS type 1 subfamily. In terms of assembly, monomer. Requires Zn(2+) as cofactor.

It is found in the cytoplasm. It carries out the reaction tRNA(Ile) + L-isoleucine + ATP = L-isoleucyl-tRNA(Ile) + AMP + diphosphate. Catalyzes the attachment of isoleucine to tRNA(Ile). As IleRS can inadvertently accommodate and process structurally similar amino acids such as valine, to avoid such errors it has two additional distinct tRNA(Ile)-dependent editing activities. One activity is designated as 'pretransfer' editing and involves the hydrolysis of activated Val-AMP. The other activity is designated 'posttransfer' editing and involves deacylation of mischarged Val-tRNA(Ile). This Yersinia pseudotuberculosis serotype O:1b (strain IP 31758) protein is Isoleucine--tRNA ligase.